Consider the following 211-residue polypeptide: Probable nicotinate-nucleotide adenylyltransferase (211 aa).

The protein belongs to the NadD family.

The catalysed reaction is nicotinate beta-D-ribonucleotide + ATP + H(+) = deamido-NAD(+) + diphosphate. Its pathway is cofactor biosynthesis; NAD(+) biosynthesis; deamido-NAD(+) from nicotinate D-ribonucleotide: step 1/1. Functionally, catalyzes the reversible adenylation of nicotinate mononucleotide (NaMN) to nicotinic acid adenine dinucleotide (NaAD). The sequence is that of Probable nicotinate-nucleotide adenylyltransferase from Shewanella sediminis (strain HAW-EB3).